A 158-amino-acid chain; its full sequence is D-aminoacyl-tRNA deacylase (158 aa).

The Gly-cisPro motif, important for rejection of L-amino acids motif lies at 143-144; sequence GP.

Belongs to the DTD family. As to quaternary structure, homodimer.

The protein resides in the cytoplasm. It catalyses the reaction glycyl-tRNA(Ala) + H2O = tRNA(Ala) + glycine + H(+). It carries out the reaction a D-aminoacyl-tRNA + H2O = a tRNA + a D-alpha-amino acid + H(+). Its function is as follows. An aminoacyl-tRNA editing enzyme that deacylates mischarged D-aminoacyl-tRNAs. Also deacylates mischarged glycyl-tRNA(Ala), protecting cells against glycine mischarging by AlaRS. Acts via tRNA-based rather than protein-based catalysis; rejects L-amino acids rather than detecting D-amino acids in the active site. By recycling D-aminoacyl-tRNA to D-amino acids and free tRNA molecules, this enzyme counteracts the toxicity associated with the formation of D-aminoacyl-tRNA entities in vivo and helps enforce protein L-homochirality. This chain is D-aminoacyl-tRNA deacylase, found in Solidesulfovibrio magneticus (strain ATCC 700980 / DSM 13731 / RS-1) (Desulfovibrio magneticus).